We begin with the raw amino-acid sequence, 186 residues long: dCTP deaminase (186 aa).

DCTP is bound at residue 107 to 112 (KSTYAR). E133 acts as the Proton donor/acceptor in catalysis. DCTP contacts are provided by Q152, Y166, and Q176.

It belongs to the dCTP deaminase family. As to quaternary structure, homotrimer.

It catalyses the reaction dCTP + H2O + H(+) = dUTP + NH4(+). Its pathway is pyrimidine metabolism; dUMP biosynthesis; dUMP from dCTP (dUTP route): step 1/2. In terms of biological role, catalyzes the deamination of dCTP to dUTP. The polypeptide is dCTP deaminase (Campylobacter jejuni subsp. doylei (strain ATCC BAA-1458 / RM4099 / 269.97)).